Reading from the N-terminus, the 74-residue chain is uncharacterized protein (74 aa).

Residues 25-62 (QQTIDRLAGLELRMKQLIRAIEVNNELLRTMQEQQNRV) adopt a coiled-coil conformation.

This is an uncharacterized protein from Bacillus subtilis (strain 168).